A 740-amino-acid polypeptide reads, in one-letter code: Ribosomal protein S6 kinase alpha-6 (740 aa).

The 260-residue stretch at 67-326 folds into the Protein kinase 1 domain; sequence FELLKVLGQG…VEEIKRHTFF (260 aa). Residues 73-81 and K99 each bind ATP; that span reads LGQGSFGKV. D192 functions as the Proton acceptor in the catalytic mechanism. The AGC-kinase C-terminal domain maps to 327–396; that stretch reads STIDWNKLYR…VAPVSLEESK (70 aa). One can recognise a Protein kinase 2 domain in the interval 420–677; sequence YELKEDIGVG…AEQVLKHSWI (258 aa). ATP contacts are provided by residues 426–434 and K449; that span reads IGVGSYSIC. The active-site Proton acceptor is the D537.

The protein belongs to the protein kinase superfamily. AGC Ser/Thr protein kinase family. S6 kinase subfamily. Forms a complex with either ERK1 or ERK2 in quiescent cells. Transiently dissociates following mitogenic stimulation. Mg(2+) serves as cofactor.

The enzyme catalyses L-seryl-[protein] + ATP = O-phospho-L-seryl-[protein] + ADP + H(+). It catalyses the reaction L-threonyl-[protein] + ATP = O-phospho-L-threonyl-[protein] + ADP + H(+). With respect to regulation, activated by multiple phosphorylations on threonine and serine residues. In terms of biological role, serine/threonine kinase that may play a role in mediating the growth-factor and stress induced activation of the transcription factor CREB. In Danio rerio (Zebrafish), this protein is Ribosomal protein S6 kinase alpha-6 (rps6ka6).